Consider the following 229-residue polypeptide: Transcriptional regulatory protein YxdJ (229 aa).

Positions 3 to 116 (KIMIVEDSED…IVLAKIKSQI (114 aa)) constitute a Response regulatory domain. Asp52 bears the 4-aspartylphosphate mark. Residues 129 to 227 (EKVVEYAGVQ…VRGEGYQLRA (99 aa)) constitute a DNA-binding region (ompR/PhoB-type).

Post-translationally, phosphorylated by YxdK.

It localises to the cytoplasm. Functionally, probable member of the two-component regulatory system YxdK/YxdJ. Positively regulates the expression of the yxdLMyxeA operon by direct interaction with its promoter region. Could also indirectly regulate the expression of the dlt operon. The sequence is that of Transcriptional regulatory protein YxdJ (yxdJ) from Bacillus subtilis (strain 168).